We begin with the raw amino-acid sequence, 346 residues long: Calcium uniporter protein, mitochondrial (346 aa).

Residues 1-195 are Mitochondrial matrix-facing; the sequence is MTKGKLLTTP…ECDKAAHRGA (195 aa). A disordered region spans residues 55-120; sequence ELPPPDPQDS…GEGKDEGEFV (66 aa). 2 stretches are compositionally biased toward basic and acidic residues: residues 76-91 and 109-119; these read MEAK…KADT and REGEGKDEGEF. The chain crosses the membrane as a helical span at residues 196–216; that stretch reads QRIALAGCGGLIGYWYIVYRL. Residues 217–226 are Mitochondrial intermembrane-facing; that stretch reads TFETDLGWDV. The Selectivity filter signature appears at 224–232; sequence WDVMEPVTY. The helical transmembrane segment at 227 to 248 threads the bilayer; the sequence is MEPVTYLVGLSTLIGGYMWFLW. Glutamate 228 is a Ca(2+) binding site. The Mitochondrial matrix portion of the chain corresponds to 249-346; that stretch reads HNREVSYRSA…KEGEEDDEDD (98 aa). Residues 306–346 are disordered; that stretch reads WNETQDEGGDEKVTKALRDERKNNNGTKNKSKEGEEDDEDD. Residues 315 to 328 show a composition bias toward basic and acidic residues; it reads DEKVTKALRDERKN.

The protein belongs to the MCU (TC 1.A.77) family. Homotetramer, assembles in a dimer or dimers configuration with two interfaces.

It localises to the mitochondrion inner membrane. It catalyses the reaction Ca(2+)(in) = Ca(2+)(out). Highly selective calcium channel localized to the inner mitochondrial membrane, which mediates calcium uptake into the mitochondrial matrix. Mitochondrial calcium homeostasis plays key roles in cellular physiology and regulates ATP production, cytoplasmic calcium signals and activation of cell death pathways. Sufficient to operate as a pore-forming channel without the need of calcium-sensor or auxiliary subunit. The chain is Calcium uniporter protein, mitochondrial from Cyphellophora europaea (strain CBS 101466) (Phialophora europaea).